Reading from the N-terminus, the 417-residue chain is Snake venom metalloproteinase kistomin (417 aa).

Residues 1-20 (MIEVLLVTICLAAFPYQGSS) form the signal peptide. Positions 21-189 (IILESGNVND…KKPFRLNLTP (169 aa)) are excised as a propeptide. Residues 197–391 (AKVYLVIVAD…RKPECLFKKP (195 aa)) form the Peptidase M12B domain. Cystine bridges form between Cys308/Cys386, Cys348/Cys370, and Cys350/Cys353. Zn(2+) is bound at residue His333. The active site involves Glu334. His337 and His343 together coordinate Zn(2+). The propeptide occupies 392 to 417 (LRTDTVSTPVSGNEPLEVITMDDFYA).

This sequence belongs to the venom metalloproteinase (M12B) family. P-I subfamily. Monomer. It depends on Zn(2+) as a cofactor. Expressed by the venom gland.

The protein localises to the secreted. Inhibited by EDTA, and O-phenanthrolene. In terms of biological role, snake venom zinc metalloprotease that inhibits platelet aggregation by binding specifically to platelet glycoprotein VI (GP6) and platelet glycoprotein Ib alpha (GP1BA). It inhibits the interaction between collagen and platelet GP6 by cleaving GP6 (at '225-Glu-|-Ala-226' and '238-Val-|-Phe-239' bonds), and inhibits vWF-induced platelet aggregation by cleaving GP1BA and vWF. Cleavage of GP1BA occurs at two distinct sites to generate two soluble fragments. It also cleaves alpha- (FGA) and subsequently the gamma-chain (FGG) of fibrinogen, leaving the beta-chain unaffected. It also inhibits collagen-, convulxin- and ristocetin-induced platelet aggregation. It blocks the adhesion of platelet to immobilized collagen, but only exerts a slight inhibition to fibrinogen. In vivo, it exerts potent antithrombotic effect. The chain is Snake venom metalloproteinase kistomin from Calloselasma rhodostoma (Malayan pit viper).